Consider the following 336-residue polypeptide: Ferredoxin--NADP reductase (336 aa).

Glu-34, Gln-42, Tyr-47, Val-87, Phe-121, Asp-286, and Ser-326 together coordinate FAD.

It belongs to the ferredoxin--NADP reductase type 2 family. Homodimer. FAD serves as cofactor.

The enzyme catalyses 2 reduced [2Fe-2S]-[ferredoxin] + NADP(+) + H(+) = 2 oxidized [2Fe-2S]-[ferredoxin] + NADPH. This Leuconostoc mesenteroides subsp. mesenteroides (strain ATCC 8293 / DSM 20343 / BCRC 11652 / CCM 1803 / JCM 6124 / NCDO 523 / NBRC 100496 / NCIMB 8023 / NCTC 12954 / NRRL B-1118 / 37Y) protein is Ferredoxin--NADP reductase.